Consider the following 301-residue polypeptide: NDP-polyphosphate phosphotransferase 3 (301 aa).

Residues 1 to 12 (MNRNGSTKDPRR) are compositionally biased toward basic and acidic residues. Residues 1 to 21 (MNRNGSTKDPRRMTGAATGEI) form a disordered region.

The protein belongs to the polyphosphate kinase 2 (PPK2) family. Class I subfamily. Requires Mg(2+) as cofactor.

It carries out the reaction [phosphate](n) + ATP = [phosphate](n+1) + ADP. The enzyme catalyses [phosphate](n) + CTP = [phosphate](n+1) + CDP. The catalysed reaction is [phosphate](n) + GTP = [phosphate](n+1) + GDP. It catalyses the reaction [phosphate](n) + UTP = [phosphate](n+1) + UDP. Its function is as follows. Uses inorganic polyphosphate (polyP) as a donor to convert NDP to NTP. PolyP hydrolysis is slightly faster with UDP, but it can also use ADP, GDP and CDP. The protein is NDP-polyphosphate phosphotransferase 3 of Ruegeria pomeroyi (strain ATCC 700808 / DSM 15171 / DSS-3) (Silicibacter pomeroyi).